The primary structure comprises 264 residues: Thymidylate synthase (264 aa).

Position 21 (arginine 21) interacts with dUMP. Histidine 51 contributes to the (6R)-5,10-methylene-5,6,7,8-tetrahydrofolate binding site. 126–127 (RR) serves as a coordination point for dUMP. The active-site Nucleophile is cysteine 146. Residues 166–169 (RSAD), asparagine 177, and 207–209 (HLY) each bind dUMP. Aspartate 169 is a binding site for (6R)-5,10-methylene-5,6,7,8-tetrahydrofolate. Alanine 263 provides a ligand contact to (6R)-5,10-methylene-5,6,7,8-tetrahydrofolate.

This sequence belongs to the thymidylate synthase family. Bacterial-type ThyA subfamily. As to quaternary structure, homodimer.

The protein resides in the cytoplasm. It catalyses the reaction dUMP + (6R)-5,10-methylene-5,6,7,8-tetrahydrofolate = 7,8-dihydrofolate + dTMP. Its pathway is pyrimidine metabolism; dTTP biosynthesis. Functionally, catalyzes the reductive methylation of 2'-deoxyuridine-5'-monophosphate (dUMP) to 2'-deoxythymidine-5'-monophosphate (dTMP) while utilizing 5,10-methylenetetrahydrofolate (mTHF) as the methyl donor and reductant in the reaction, yielding dihydrofolate (DHF) as a by-product. This enzymatic reaction provides an intracellular de novo source of dTMP, an essential precursor for DNA biosynthesis. The polypeptide is Thymidylate synthase (Bartonella henselae (strain ATCC 49882 / DSM 28221 / CCUG 30454 / Houston 1) (Rochalimaea henselae)).